Reading from the N-terminus, the 183-residue chain is Pectinesterase inhibitor 8 (183 aa).

An N-terminal signal peptide occupies residues 1–30; that stretch reads MAQRASRRPAAAAAAVVVAVVLAVSGGVGA. Intrachain disulfides connect Cys36/Cys51 and Cys107/Cys147.

The protein belongs to the PMEI family.

It localises to the secreted. The protein localises to the extracellular space. Its subcellular location is the apoplast. Its function is as follows. Pectin methylesterase (PME) inhibitor that inhibits PME in vitro. The sequence is that of Pectinesterase inhibitor 8 from Oryza sativa subsp. japonica (Rice).